A 261-amino-acid polypeptide reads, in one-letter code: MKIVLKIGGAALENKDLVGQFCTTVASLAKDGHHVLVVHGGGAALSRTLKELGIEPKFLNGLRVTDARTRDVALMVLGGLLNKQLAAAIGAVGQPAIGLCGSDLHLCVARKKPLAEDLGFVGEIASVNEEAIAHLWANNAVPVVASLAQGADGEFYNINADEMASALAAACIADTLIFLTDVPGVKDANGDVLNRLGLDRIESLIANGIVSGGMLPKLEACKRALQAGVGSVRILPATKAEALPSLFESPIAFGTELVATV.

Substrate contacts are provided by residues 41–42 (GG), Arg63, and Asn157.

Belongs to the acetylglutamate kinase family. ArgB subfamily.

It is found in the cytoplasm. The enzyme catalyses N-acetyl-L-glutamate + ATP = N-acetyl-L-glutamyl 5-phosphate + ADP. It participates in amino-acid biosynthesis; L-arginine biosynthesis; N(2)-acetyl-L-ornithine from L-glutamate: step 2/4. Functionally, catalyzes the ATP-dependent phosphorylation of N-acetyl-L-glutamate. This is Acetylglutamate kinase from Koribacter versatilis (strain Ellin345).